Consider the following 502-residue polypeptide: Protein IWS1 homolog 1 (502 aa).

The segment covering 1–12 (MGFEDDPYRDVD) has biased composition (basic and acidic residues). Disordered regions lie at residues 1-61 (MGFE…DNDK) and 87-208 (DEDV…DEDE). Acidic residues-rich tracts occupy residues 13-22 (GEPIVDFDDF), 34-49 (QDFD…DWDG), and 87-97 (DEDVDDAEFDE). Basic and acidic residues-rich tracts occupy residues 138 to 151 (NRGE…DEMW) and 181 to 194 (PSER…DRSP). Y185 is modified (phosphotyrosine). The TFIIS N-terminal domain occupies 287–370 (TLLKNWLEPL…DKWSRPIFNK (84 aa)). The interval 385–434 (VPYRRPPVKKPSNKATMESRDGDFDLEIRERKTGLTSGQSSRGDRQMTMR) is disordered. The segment covering 401-417 (MESRDGDFDLEIRERKT) has biased composition (basic and acidic residues).

The protein belongs to the IWS1 family. As to quaternary structure, interacts with BZR2/BES1 and SPT6 (via N-terminus). Interacts with ASHH2/SDG8.

It is found in the nucleus. Its function is as follows. Transcription factor involved in RNA polymerase II (RNAPII) transcription regulation. Involved in transcription elongation. May function at post-recruitment and elongation steps of transcription. May be recruited by BZR2/BES1 to target genes and promote their expression during transcription elongation process. Required for brassinosteroid (BR)-induced gene expression. Required the for regulation of numerous nitrogen-responsive genes in roots. Acts in roots to repress NRT2.1 transcription in response to high nitrogen supply. This repression is associated with an IWS1-dependent increase of trimethylation on 'Lys-27' H3K27me3 at the NRT2.1 locus. This Arabidopsis thaliana (Mouse-ear cress) protein is Protein IWS1 homolog 1.